Reading from the N-terminus, the 800-residue chain is Fibroblast growth factor receptor 3 (800 aa).

Residues 1–20 (MVPLCLLLYLATLVFPPVYS) form the signal peptide. Residues 21–122 (AHLLSPEPTD…YTVKVIDSLS (102 aa)) enclose the Ig-like C2-type 1 domain. The Extracellular segment spans residues 21 to 363 (AHLLSPEPTD…EMEREDDYAD (343 aa)). An intrachain disulfide couples cysteine 55 to cysteine 101. Asparagine 77, asparagine 90, and asparagine 112 each carry an N-linked (GlcNAc...) asparagine glycan. A compositionally biased stretch (acidic residues) spans 124-136 (GDDEDYDEDEDEA). The tract at residues 124–143 (GDDEDYDEDEDEAGNGNAEA) is disordered. Ig-like C2-type domains follow at residues 144–237 (PYWT…YQLD) and 246–348 (PILQ…AWLT). Cysteine 169 and cysteine 221 are oxidised to a cystine. 5 N-linked (GlcNAc...) asparagine glycosylation sites follow: asparagine 218, asparagine 255, asparagine 287, asparagine 308, and asparagine 321. Cysteine 268 and cysteine 332 are joined by a disulfide. The helical transmembrane segment at 364–384 (ILIYVTSCVLFILTMVIIILC) threads the bilayer. The Cytoplasmic portion of the chain corresponds to 385–800 (RMWINTQKTL…HHHSNGVIRT (416 aa)). Residues 460–739 (LTLGKPLGEG…RQLVEDHDRV (280 aa)) form the Protein kinase domain. Residues 466-474 (LGEGCFGQV) and lysine 496 contribute to the ATP site. Residue aspartate 605 is the Proton acceptor of the active site. 4 positions are modified to phosphotyrosine; by autocatalysis: tyrosine 635, tyrosine 636, tyrosine 712, and tyrosine 748. Residues 764-773 (DSNSTCSSGD) are compositionally biased toward polar residues. The segment at 764-800 (DSNSTCSSGDDSVFAHDPLPEEPCLPKHHHSNGVIRT) is disordered.

This sequence belongs to the protein kinase superfamily. Tyr protein kinase family. Fibroblast growth factor receptor subfamily. In terms of assembly, monomer. Homodimer after ligand binding. In terms of processing, autophosphorylated. Binding of FGF family members together with heparan sulfate proteoglycan or heparin promotes receptor dimerization and autophosphorylation on tyrosine residues. Autophosphorylation occurs in trans between the two FGFR molecules present in the dimer.

Its subcellular location is the cell membrane. The catalysed reaction is L-tyrosyl-[protein] + ATP = O-phospho-L-tyrosyl-[protein] + ADP + H(+). Its activity is regulated as follows. Present in an inactive conformation in the absence of bound ligand. Ligand binding leads to dimerization and activation by autophosphorylation on tyrosine residues. Functionally, tyrosine-protein kinase that acts as a cell-surface receptor for fibroblast growth factors and plays an essential role in the regulation of cell proliferation, differentiation and apoptosis. Plays an essential role in the regulation of chondrocyte differentiation, proliferation and apoptosis, and is required for normal skeleton development. Regulates both osteogenesis and postnatal bone mineralization by osteoblasts. Promotes apoptosis in chondrocytes, but can also promote cancer cell proliferation. Phosphorylates PLCG1, CBL and FRS2. Ligand binding leads to the activation of several signaling cascades. Activation of PLCG1 leads to the production of the cellular signaling molecules diacylglycerol and inositol 1,4,5-trisphosphate. Phosphorylation of FRS2 triggers recruitment of GRB2, GAB1, PIK3R1 and SOS1, and mediates activation of RAS, MAPK1/ERK2, MAPK3/ERK1 and the MAP kinase signaling pathway, as well as of the AKT1 signaling pathway. In Danio rerio (Zebrafish), this protein is Fibroblast growth factor receptor 3 (fgfr3).